Here is a 213-residue protein sequence, read N- to C-terminus: Inactive ribonuclease-like protein 10 (213 aa).

Positions 1–24 (MKLTLVQFFFMMLLLLLGLGVGLG) are cleaved as a signal peptide. N-linked (GlcNAc...) asparagine glycosylation is present at asparagine 128.

The protein belongs to the pancreatic ribonuclease family. In terms of processing, the N-terminus is blocked. Glycosylated. In terms of tissue distribution, male-specific expression in proximal caput of the epididymis.

The protein resides in the secreted. Its function is as follows. Secreted proximal epididymal protein required for post-testicular sperm maturation and male fertility. May be involved in sperm adhesion to the egg zona pellucida. Does not have ribonuclease activity. The chain is Inactive ribonuclease-like protein 10 (RNASE10) from Sus scrofa (Pig).